Here is a 508-residue protein sequence, read N- to C-terminus: MHKKVLLAILDGYGISNKQHGNAVYHAKTPALDSLIKDYPCVMLEASGEAVGLPQGQIGNSEVGHLNIGAGRIVYTGLSLINQNIKTGAFHHNQVLLEAIARAKANNAKLHLIGLFSHGGVHSHMDHLYALIKLAAPQVKMVLHLFGDGRDVAPCTMKSDLEAFMVFLKDYHNVIIGTLGGRYYGMDRDQRWDREEIAYNAILGNSKASFTDPVAYVQSAYDQKVTDEFLYPAVNGNVDKEQFALKDHDSVIFFNFRPDRARQMSHMLFQTDYYDYTPKAGRKYNLFFVTMMNYEGIKPSAVVFPPETIPNTFGEVIAHNKLKQLRIAETEKYAHVTFFFDGGVEVDLPNETKCMVPSLKVATYDLAPEMACKGITDQLLNQINQFDLTVLNFANPDMVGHTGNYAACVQGLEALDVQIQRIIDFCKANHITLFLTADHGNAEEMIDSNNNPVTKHTVNKVPFVCTDTNIDLQQDSASLANIAPTILAYLGLKQPAEMTANSLLISKK.

Positions 11 and 61 each coordinate Mn(2+). The active-site Phosphoserine intermediate is the Ser-61. Substrate-binding positions include His-122, 150-151, Arg-182, Arg-188, 257-260, and Lys-332; these read RD and RPDR. Residues Asp-397, His-401, Asp-438, His-439, and His-456 each contribute to the Mn(2+) site.

Belongs to the BPG-independent phosphoglycerate mutase family. Monomer. Mn(2+) serves as cofactor.

The enzyme catalyses (2R)-2-phosphoglycerate = (2R)-3-phosphoglycerate. Its pathway is carbohydrate degradation; glycolysis; pyruvate from D-glyceraldehyde 3-phosphate: step 3/5. Catalyzes the interconversion of 2-phosphoglycerate and 3-phosphoglycerate. In Mycoplasma pneumoniae (strain ATCC 29342 / M129 / Subtype 1) (Mycoplasmoides pneumoniae), this protein is 2,3-bisphosphoglycerate-independent phosphoglycerate mutase.